The chain runs to 203 residues: Inactive ribonuclease-like protein 9 (203 aa).

A signal peptide spans 1 to 25; it reads MRTPITTHSLLLLLLLQQLLQPVQL. Disulfide bonds link Cys-96-Cys-151, Cys-114-Cys-166, and Cys-121-Cys-128. Asn-129 and Asn-141 each carry an N-linked (GlcNAc...) asparagine glycan.

It belongs to the pancreatic ribonuclease family.

It is found in the secreted. Functionally, does not exhibit any ribonuclease activity. The chain is Inactive ribonuclease-like protein 9 (RNASE9) from Macaca assamensis (Assam macaque).